Here is a 133-residue protein sequence, read N- to C-terminus: Helix-loop-helix protein 1 (133 aa).

Residues Met-1–Thr-78 form a disordered region. Gly residues predominate over residues Asp-25–Asp-39. Basic and acidic residues predominate over residues Glu-52–Glu-65. Positions Arg-66–Thr-78 are enriched in basic residues. The bHLH domain maps to Lys-75 to Leu-127.

Efficient DNA binding requires dimerization with another bHLH protein.

It is found in the nucleus. In terms of biological role, may serve as DNA-binding protein and may be involved in the control of cell-type determination, possibly within the developing nervous system. The chain is Helix-loop-helix protein 1 (Nhlh1) from Mus musculus (Mouse).